A 563-amino-acid polypeptide reads, in one-letter code: Group II intron-interrupted relaxase LtrB (563 aa).

Tyr-44 is an active-site residue. Mg(2+) is bound by residues His-159 and His-161.

The protein belongs to the mobilization (MOB) protein type 1 family. It depends on Mg(2+) as a cofactor. Mn(2+) serves as cofactor.

Its function is as follows. Mediates initiation of conjugal transfer possibly by introducing a single-stranded nick at the potential origin of transfer. The sequence is that of Group II intron-interrupted relaxase LtrB (ltrBE1) from Lactococcus lactis subsp. cremoris (strain MG1363).